We begin with the raw amino-acid sequence, 316 residues long: Glutathione synthetase (316 aa).

One can recognise an ATP-grasp domain in the interval 125–310; sequence KLFTAWFSDL…ITGMLMDAIE (186 aa). Arg-256 carries N-beta-linked (GlcNAc) arginine glycosylation. Mg(2+) is bound by residues Glu-281 and Asn-283.

It belongs to the prokaryotic GSH synthase family. The cofactor is Mg(2+). Mn(2+) serves as cofactor.

The enzyme catalyses gamma-L-glutamyl-L-cysteine + glycine + ATP = glutathione + ADP + phosphate + H(+). It participates in sulfur metabolism; glutathione biosynthesis; glutathione from L-cysteine and L-glutamate: step 2/2. The sequence is that of Glutathione synthetase from Escherichia coli O127:H6 (strain E2348/69 / EPEC).